Here is a 157-residue protein sequence, read N- to C-terminus: MSKPVILTYEGLKKLEEELEYLKTVKRAEVAEKIKQARAFGDLSENSEYDEAKNEQAFIEGRIATLEAMLKNAKVIDEEDIKLDQVSIGCTVKVYDESYNEEVEYTIVGSAEADPMNNKISDESPIGKALLGKKVGDVVSVEVPAGIIKLKILEIRK.

A coiled-coil region spans residues 12–74 (LKKLEEELEY…TLEAMLKNAK (63 aa)).

The protein belongs to the GreA/GreB family.

In terms of biological role, necessary for efficient RNA polymerase transcription elongation past template-encoded arresting sites. The arresting sites in DNA have the property of trapping a certain fraction of elongating RNA polymerases that pass through, resulting in locked ternary complexes. Cleavage of the nascent transcript by cleavage factors such as GreA or GreB allows the resumption of elongation from the new 3'terminus. GreA releases sequences of 2 to 3 nucleotides. The chain is Transcription elongation factor GreA from Thermoanaerobacter pseudethanolicus (strain ATCC 33223 / 39E) (Clostridium thermohydrosulfuricum).